Reading from the N-terminus, the 145-residue chain is 3-hydroxyacyl-[acyl-carrier-protein] dehydratase FabZ (145 aa).

Residue His-48 is part of the active site.

Belongs to the thioester dehydratase family. FabZ subfamily.

It localises to the cytoplasm. It catalyses the reaction a (3R)-hydroxyacyl-[ACP] = a (2E)-enoyl-[ACP] + H2O. In terms of biological role, involved in unsaturated fatty acids biosynthesis. Catalyzes the dehydration of short chain beta-hydroxyacyl-ACPs and long chain saturated and unsaturated beta-hydroxyacyl-ACPs. This Stutzerimonas stutzeri (strain A1501) (Pseudomonas stutzeri) protein is 3-hydroxyacyl-[acyl-carrier-protein] dehydratase FabZ.